Here is a 141-residue protein sequence, read N- to C-terminus: Hemoglobin subunit alpha (141 aa).

Residues 1–141 (VLSAEDKANV…VSTVLTSKYR (141 aa)) enclose the Globin domain. At S3 the chain carries Phosphoserine. K7 and K11 each carry N6-succinyllysine. The residue at position 16 (K16) is an N6-acetyllysine; alternate. The residue at position 16 (K16) is an N6-succinyllysine; alternate. Y24 bears the Phosphotyrosine mark. Residue S35 is modified to Phosphoserine. At K40 the chain carries N6-succinyllysine. S49 carries the phosphoserine modification. H58 lines the O2 pocket. Position 87 (H87) interacts with heme b. S102 bears the Phosphoserine mark. T108 bears the Phosphothreonine mark. Phosphoserine occurs at positions 124 and 131. Residues T134 and T137 each carry the phosphothreonine modification. S138 is subject to Phosphoserine.

It belongs to the globin family. In terms of assembly, heterotetramer of two alpha chains and two beta chains. Red blood cells.

Functionally, involved in oxygen transport from the lung to the various peripheral tissues. The chain is Hemoglobin subunit alpha from Peromyscus crinitus (Canyon mouse).